A 70-amino-acid polypeptide reads, in one-letter code: Putative membrane protein insertion efficiency factor (70 aa).

The protein belongs to the UPF0161 family.

The protein localises to the cell membrane. Functionally, could be involved in insertion of integral membrane proteins into the membrane. The chain is Putative membrane protein insertion efficiency factor from Rubrobacter xylanophilus (strain DSM 9941 / JCM 11954 / NBRC 16129 / PRD-1).